A 129-amino-acid polypeptide reads, in one-letter code: Fluoride-specific ion channel FluC (129 aa).

The next 4 membrane-spanning stretches (helical) occupy residues L5 to V25, A32 to M52, L60 to F80, and A99 to I119. The Na(+) site is built by G75 and T78.

The protein belongs to the fluoride channel Fluc/FEX (TC 1.A.43) family.

It localises to the cell inner membrane. It catalyses the reaction fluoride(in) = fluoride(out). Its activity is regulated as follows. Na(+) is not transported, but it plays an essential structural role and its presence is essential for fluoride channel function. In terms of biological role, fluoride-specific ion channel. Important for reducing fluoride concentration in the cell, thus reducing its toxicity. This is Fluoride-specific ion channel FluC from Pelobacter propionicus (strain DSM 2379 / NBRC 103807 / OttBd1).